Consider the following 468-residue polypeptide: Probable cytosol aminopeptidase (468 aa).

The Mn(2+) site is built by Lys242 and Asp247. Residue Lys254 is part of the active site. Mn(2+)-binding residues include Asp265, Asp324, and Glu326. Arg328 is a catalytic residue.

It belongs to the peptidase M17 family. It depends on Mn(2+) as a cofactor.

The protein resides in the cytoplasm. The enzyme catalyses Release of an N-terminal amino acid, Xaa-|-Yaa-, in which Xaa is preferably Leu, but may be other amino acids including Pro although not Arg or Lys, and Yaa may be Pro. Amino acid amides and methyl esters are also readily hydrolyzed, but rates on arylamides are exceedingly low.. It carries out the reaction Release of an N-terminal amino acid, preferentially leucine, but not glutamic or aspartic acids.. Functionally, presumably involved in the processing and regular turnover of intracellular proteins. Catalyzes the removal of unsubstituted N-terminal amino acids from various peptides. In Neisseria meningitidis serogroup A / serotype 4A (strain DSM 15465 / Z2491), this protein is Probable cytosol aminopeptidase.